The chain runs to 465 residues: Histidine--tRNA ligase (465 aa).

It belongs to the class-II aminoacyl-tRNA synthetase family. As to quaternary structure, homodimer.

The protein resides in the cytoplasm. The catalysed reaction is tRNA(His) + L-histidine + ATP = L-histidyl-tRNA(His) + AMP + diphosphate + H(+). In Pelagibacter ubique (strain HTCC1062), this protein is Histidine--tRNA ligase (hisS).